We begin with the raw amino-acid sequence, 133 residues long: Methylglyoxal synthase (133 aa).

The MGS-like domain maps to 1-133 (MPPKPRIALI…ARENGAAQAG (133 aa)). Substrate-binding positions include His12, Lys16, 38-41 (TGTT), and 58-59 (SG). Asp64 (proton donor/acceptor) is an active-site residue. His91 provides a ligand contact to substrate.

The protein belongs to the methylglyoxal synthase family.

It catalyses the reaction dihydroxyacetone phosphate = methylglyoxal + phosphate. Functionally, catalyzes the formation of methylglyoxal from dihydroxyacetone phosphate. The chain is Methylglyoxal synthase from Cupriavidus taiwanensis (strain DSM 17343 / BCRC 17206 / CCUG 44338 / CIP 107171 / LMG 19424 / R1) (Ralstonia taiwanensis (strain LMG 19424)).